The primary structure comprises 707 residues: Signal transducer and activator of transcription A (707 aa).

Polar residues predominate over residues 70–89 (LNQSDQFNLGRSNNLTPRTN). The interval 70–246 (LNQSDQFNLG…GNPNLSSPQP (177 aa)) is disordered. The segment covering 90-111 (QLQQLQQQQQQQQQPQQQQQQQ) has biased composition (low complexity). Polar residues predominate over residues 112 to 121 (TYGTQSPIHM). Residues 142 to 238 (QQSYNNNNSN…QQQQQQQQGN (97 aa)) are compositionally biased toward low complexity. Positions 242–356 (SSPQPILDTI…IQSILNPQHS (115 aa)) form a coiled coil. A DNA-binding region spans residues 443–487 (KFLAGTRKCSVNLKFGVNIRDLDNVTTTVESDASNPFVVITNECQ). One can recognise an SH2 domain in the interval 583 to 686 (WQEGIIYGYM…FLKLHKDTAL (104 aa)). Residue Y702 is modified to Phosphotyrosine.

Belongs to the transcription factor STAT family. Monomer, in the absence of tyrosine phosphorylation. Homodimer, or heterodimer with another family member, when tyrosine phosphorylated. In terms of processing, tyrosine phosphorylated in response to cAMP. Not tyrosine phosphorylated in growing cells. Tyrosine phosphorylation is first detected at the tight mound stage, continues throughout the slug stage and early culmination, and starts to decrease at mid-culmination. Barely detectable in fruiting bodies.

Its subcellular location is the cytoplasm. It localises to the nucleus. In terms of biological role, transcription factor that binds to 5'-TTGAATTGA-3' elements in the promoter region of target genes. Functions as a repressor of the ecmB gene. Regulates the differentiation of prestalk cells during development. The sequence is that of Signal transducer and activator of transcription A (dstA) from Dictyostelium discoideum (Social amoeba).